The following is a 309-amino-acid chain: Prepilin leader peptidase/N-methyltransferase (309 aa).

The helical transmembrane segment at 35–55 (MQLAFAIVLGLVVGSFINVVV) threads the bilayer. Residues Cys96, Cys99, Cys121, and Cys124 each coordinate Zn(2+). A run of 6 helical transmembrane segments spans residues 147 to 167 (LALF…AALL), 183 to 203 (LTLP…FASL), 207 to 227 (VIGA…FKLL), 230 to 250 (IEGI…WLGW), 253 to 273 (LPQV…VATW), and 288 to 308 (FLAA…LLLG).

Belongs to the peptidase A24 family. Zn(2+) is required as a cofactor.

Its subcellular location is the cell inner membrane. The enzyme catalyses Typically cleaves a -Gly-|-Phe- bond to release an N-terminal, basic peptide of 5-8 residues from type IV prepilin, and then N-methylates the new N-terminal amino group, the methyl donor being S-adenosyl-L-methionine.. Its function is as follows. Plays an essential role in type IV pili and type II pseudopili formation by proteolytically removing the leader sequence from substrate proteins and subsequently monomethylating the alpha-amino group of the newly exposed N-terminal phenylalanine. The protein is Prepilin leader peptidase/N-methyltransferase (gspO) of Burkholderia pseudomallei (strain K96243).